The primary structure comprises 105 residues: Integration host factor subunit alpha (105 aa).

This sequence belongs to the bacterial histone-like protein family. In terms of assembly, heterodimer of an alpha and a beta chain.

Functionally, this protein is one of the two subunits of integration host factor, a specific DNA-binding protein that functions in genetic recombination as well as in transcriptional and translational control. This chain is Integration host factor subunit alpha, found in Xanthobacter autotrophicus (strain ATCC BAA-1158 / Py2).